The primary structure comprises 261 residues: tRNA U34 carboxymethyltransferase (261 aa).

Residues K25, W39, K44, G63, 114–115, Y135, and R250 contribute to the carboxy-S-adenosyl-L-methionine site; that span reads VE.

This sequence belongs to the class I-like SAM-binding methyltransferase superfamily. CmoB family. Homotetramer.

It catalyses the reaction carboxy-S-adenosyl-L-methionine + 5-hydroxyuridine(34) in tRNA = 5-carboxymethoxyuridine(34) in tRNA + S-adenosyl-L-homocysteine + H(+). Functionally, catalyzes carboxymethyl transfer from carboxy-S-adenosyl-L-methionine (Cx-SAM) to 5-hydroxyuridine (ho5U) to form 5-carboxymethoxyuridine (cmo5U) at position 34 in tRNAs. This is tRNA U34 carboxymethyltransferase from Helicobacter pylori (strain HPAG1).